We begin with the raw amino-acid sequence, 347 residues long: NADH-ubiquinone oxidoreductase chain 2 (347 aa).

The next 10 membrane-spanning stretches (helical) occupy residues 3–23 (PLTLIIIMFTLFMGTMITVFS), 59–79 (YFLTQATASMILMMAITLNIL), 95–115 (PVLITLALIIKLGMAPFHFWV), 127–147 (GLILLTWQKLAPLSILYQISP), 149–169 (INPTMMMSVAILSIMVGGWGG), 178–198 (ILAYSSIAHMGWMAAIITFNP), 200–220 (TMVLNLIIYILMTIPMFMMFM), 241–261 (VSTILITLMSLGGLPPLTGFI), 274–294 (GNIILPTAMAMLALLNLYFYM), and 325–345 (LITPLIILSTMLLPLTPALSV).

The protein belongs to the complex I subunit 2 family. As to quaternary structure, core subunit of respiratory chain NADH dehydrogenase (Complex I) which is composed of 45 different subunits. Interacts with TMEM242.

It localises to the mitochondrion inner membrane. It carries out the reaction a ubiquinone + NADH + 5 H(+)(in) = a ubiquinol + NAD(+) + 4 H(+)(out). Core subunit of the mitochondrial membrane respiratory chain NADH dehydrogenase (Complex I) which catalyzes electron transfer from NADH through the respiratory chain, using ubiquinone as an electron acceptor. Essential for the catalytic activity and assembly of complex I. This is NADH-ubiquinone oxidoreductase chain 2 from Oryctolagus cuniculus (Rabbit).